A 406-amino-acid chain; its full sequence is D-alanyl-D-alanine carboxypeptidase (406 aa).

The signal sequence occupies residues 1-31 (MVSGTVGRGTALGAVLLALLAVPAQAGTAAA). The active-site Acyl-ester intermediate is Ser93. Substrate-binding positions include 151-154 (FAQT), 190-192 (YSN), Arg316, 330-332 (TGT), and 357-358 (SN). The propeptide occupies 381-406 (AKLRSATSSATTVERHEDIAPGIARD). Residues 387-406 (TSSATTVERHEDIAPGIARD) are disordered. A compositionally biased stretch (basic and acidic residues) spans 393–406 (VERHEDIAPGIARD).

Belongs to the peptidase S12 family.

The protein resides in the secreted. It catalyses the reaction Preferential cleavage: (Ac)2-L-Lys-D-Ala-|-D-Ala. Also transpeptidation of peptidyl-alanyl moieties that are N-acyl substituents of D-alanine.. It participates in cell wall biogenesis; peptidoglycan biosynthesis. Functionally, catalyzes distinct carboxypeptidation and transpeptidation reactions during the last stages of wall peptidoglycan synthesis. Mistaking a beta-lactam antibiotic molecule for a normal substrate (i.e. a D-alanyl-D-alanine-terminated peptide), it becomes immobilized in the form of a long-lived, serine-ester-linked acyl enzyme and thus behave as penicillin-binding protein (PBP). In Streptomyces sp. (strain R61), this protein is D-alanyl-D-alanine carboxypeptidase.